Reading from the N-terminus, the 423-residue chain is Serine--tRNA ligase (423 aa).

231–233 (TGE) serves as a coordination point for L-serine. 262–264 (RQE) is a binding site for ATP. Glu-285 is a binding site for L-serine. 349 to 352 (EISS) contacts ATP. Residue Ser-385 coordinates L-serine.

It belongs to the class-II aminoacyl-tRNA synthetase family. Type-1 seryl-tRNA synthetase subfamily. Homodimer. The tRNA molecule binds across the dimer.

The protein resides in the cytoplasm. The catalysed reaction is tRNA(Ser) + L-serine + ATP = L-seryl-tRNA(Ser) + AMP + diphosphate + H(+). The enzyme catalyses tRNA(Sec) + L-serine + ATP = L-seryl-tRNA(Sec) + AMP + diphosphate + H(+). Its pathway is aminoacyl-tRNA biosynthesis; selenocysteinyl-tRNA(Sec) biosynthesis; L-seryl-tRNA(Sec) from L-serine and tRNA(Sec): step 1/1. In terms of biological role, catalyzes the attachment of serine to tRNA(Ser). Is also able to aminoacylate tRNA(Sec) with serine, to form the misacylated tRNA L-seryl-tRNA(Sec), which will be further converted into selenocysteinyl-tRNA(Sec). In Phytoplasma mali (strain AT), this protein is Serine--tRNA ligase.